Reading from the N-terminus, the 316-residue chain is Aprataxin (316 aa).

Positions 1–38 constitute an FHA-like domain; sequence HASARGEGFLLLKADCNKGYVTVKQIGVNPTSVDLVDV. The segment at 104-142 is disordered; it reads KKMEVVDTQSSSADLRPSKSSVSPHEGTTSRKEHLGHWS. Residues 110–130 show a composition bias toward polar residues; sequence DTQSSSADLRPSKSSVSPHEG. The HIT domain occupies 142-247; the sequence is SQGLKSSMQD…ISQDFDSPAL (106 aa). Interaction with DNA substrate regions lie at residues 167 to 171 and 229 to 230; these read DKYPK and SM. The Histidine triad motif signature appears at 232-236; it reads QLHLH. Catalysis depends on H234, which acts as the Tele-AMP-histidine intermediate. Residues 291–313 form a C2H2-type zinc finger; that stretch reads LRCHLCKQQLSTIPQLKEHLKKH.

It localises to the nucleus. The protein resides in the nucleoplasm. Its subcellular location is the nucleolus. The enzyme catalyses a 5'-end adenosine-5'-diphospho-5'-2'-deoxyribonucleoside-DNA + H2O = a 5'-end 5'-phospho-2'-deoxyribonucleoside-DNA + AMP + 2 H(+). It catalyses the reaction a 5'-end adenosine-5'-diphospho-5'-ribonucleoside-2'-deoxyribonucleotide-DNA + H2O = a 5'-end 5'-phospho-ribonucleoside-2'-deoxyribonucleotide-DNA + AMP + 2 H(+). It carries out the reaction a 3'-end 2'-deoxyribonucleotide-3'-diphospho-5'-guanosine-DNA + H2O = a 3'-end 2'-deoxyribonucleotide 3'-phosphate-DNA + GMP + 2 H(+). Functionally, DNA-binding protein involved in single-strand DNA break repair, double-strand DNA break repair and base excision repair. Resolves abortive DNA ligation intermediates formed either at base excision sites, or when DNA ligases attempt to repair non-ligatable breaks induced by reactive oxygen species. Catalyzes the release of adenylate groups covalently linked to 5'-phosphate termini, resulting in the production of 5'-phosphate termini that can be efficiently rejoined. Also able to hydrolyze adenosine 5'-monophosphoramidate (AMP-NH(2)) and diadenosine tetraphosphate (AppppA), but with lower catalytic activity. Likewise, catalyzes the release of 3'-linked guanosine (DNAppG) and inosine (DNAppI) from DNA, but has higher specific activity with 5'-linked adenosine (AppDNA). The protein is Aprataxin (APTX) of Gallus gallus (Chicken).